Consider the following 333-residue polypeptide: Adenosine deaminase (333 aa).

His-12 and His-14 together coordinate Zn(2+). Substrate is bound by residues His-14, Asp-16, and Gly-170. His-197 contacts Zn(2+). Glu-200 serves as the catalytic Proton donor. Asp-278 provides a ligand contact to Zn(2+). A substrate-binding site is contributed by Asp-279.

This sequence belongs to the metallo-dependent hydrolases superfamily. Adenosine and AMP deaminases family. Adenosine deaminase subfamily. Zn(2+) serves as cofactor.

The enzyme catalyses adenosine + H2O + H(+) = inosine + NH4(+). It catalyses the reaction 2'-deoxyadenosine + H2O + H(+) = 2'-deoxyinosine + NH4(+). Functionally, catalyzes the hydrolytic deamination of adenosine and 2-deoxyadenosine. In Escherichia coli O139:H28 (strain E24377A / ETEC), this protein is Adenosine deaminase.